Here is a 557-residue protein sequence, read N- to C-terminus: Putative sensory transducer protein (557 aa).

A helical transmembrane segment spans residues Thr-122 to Ile-145. Positions Arg-147–Tyr-199 constitute an HAMP domain. A Methyl-accepting transducer domain is found at Val-243 to Ser-472. Gln-268 is subject to Glutamate methyl ester (Gln). Glu-274 carries the glutamate methyl ester (Glu) modification. Gln-281 carries the post-translational modification Glutamate methyl ester (Gln). Glu-463 carries the post-translational modification Glutamate methyl ester (Glu). Residues Asp-511–Gly-541 show a composition bias toward basic and acidic residues. The disordered stretch occupies residues Asp-511–Gly-542.

Belongs to the methyl-accepting chemotaxis (MCP) protein family.

It is found in the cell membrane. May bind attractants or detect changes in the extracellular concentration of soluble sugars. This is Putative sensory transducer protein from Acetivibrio thermocellus (strain ATCC 27405 / DSM 1237 / JCM 9322 / NBRC 103400 / NCIMB 10682 / NRRL B-4536 / VPI 7372) (Clostridium thermocellum).